Consider the following 639-residue polypeptide: Bone morphogenetic protein 1 homolog (639 aa).

A signal peptide spans 1–23; that stretch reads MDLLYYMTVSLLGFILSLTTFIG. A propeptide spanning residues 24–109 is cleaved from the precursor; sequence ETTRALSDDV…RAVTARPERR (86 aa). Positions 100 to 305 constitute a Peptidase M12A domain; sequence RAVTARPERR…IQANLLYKCP (206 aa). N-linked (GlcNAc...) asparagine glycosylation is found at Asn-122 and Asn-140. 6 disulfide bridges follow: Cys-143-Cys-304, Cys-167-Cys-189, Cys-169-Cys-170, Cys-307-Cys-333, Cys-360-Cys-382, and Cys-420-Cys-446. His-197 is a binding site for Zn(2+). The active site involves Glu-198. Residues His-201 and His-207 each contribute to the Zn(2+) site. CUB domains are found at residues 307–419 and 420–531; these read CGRT…YEAI and CGGH…DFFK. Asn-317 carries an N-linked (GlcNAc...) asparagine glycan. A glycan (N-linked (GlcNAc...) asparagine) is linked at Asn-455. Disulfide bonds link Cys-473–Cys-495, Cys-536–Cys-548, Cys-544–Cys-557, and Cys-559–Cys-572. Residues 532–573 enclose the EGF-like; calcium-binding domain; it reads EKDECAQPDQGGCMDVCVNTIGSYRCDCRPGYELSSDGRRCE.

Zn(2+) is required as a cofactor. In terms of tissue distribution, ectodermal and primary mesenchyme cells in hatched blastula.

This chain is Bone morphogenetic protein 1 homolog, found in Strongylocentrotus purpuratus (Purple sea urchin).